Consider the following 858-residue polypeptide: Lysine-specific demethylase JMJ706 (858 aa).

The JmjN domain maps to 103 to 144 (CPVYYPTKEEFEDPIGYIQKIAPVASKYGICKIVSPVSASVP). Residues 250–420 (KSNWNLKNFS…LGSVASRRYA (171 aa)) enclose the JmjC domain. Fe cation contacts are provided by His293, Glu295, and His388. A compositionally biased stretch (basic and acidic residues) spans 737–746 (QHNKRPEDYG). 2 disordered regions span residues 737–791 (QHNK…SAKQ) and 829–858 (SSSTNRVVEQGSSGQRFTRDDKSLGCWPAI). The segment covering 829 to 844 (SSSTNRVVEQGSSGQR) has biased composition (polar residues).

Fe(2+) serves as cofactor.

The protein localises to the nucleus. The catalysed reaction is N(6),N(6),N(6)-trimethyl-L-lysyl(9)-[histone H3] + 2 2-oxoglutarate + 2 O2 = N(6)-methyl-L-lysyl(9)-[histone H3] + 2 formaldehyde + 2 succinate + 2 CO2. Histone demethylase that demethylates 'Lys-9' (H3K9me) of histone H3 with a specific activity for H3K9me3 and H3K9me2. No activity on H3K4me3, H3K9me1, H3K27me2 and H3K36me3/2. Involved in the control of floral organ development by demethylating H3K9me3 and H3K9me2 in the promoter regions of DH1 and MADS47. The 'Lys-9' demethylation of these two genes is required for induction of their expression. The polypeptide is Lysine-specific demethylase JMJ706 (JMJ706) (Oryza sativa subsp. japonica (Rice)).